Here is a 413-residue protein sequence, read N- to C-terminus: L-cysteine:1D-myo-inositol 2-amino-2-deoxy-alpha-D-glucopyranoside ligase (413 aa).

Residues 1–21 (MQSWSDTALPSVPGQGPPLRL) are disordered. Cys43 contacts Zn(2+). Residues 43 to 46 (CGIT), Thr58, and 81 to 83 (NVT) contribute to the L-cysteinyl-5'-AMP site. A 'HIGH' region motif is present at residues 45–55 (ITPYDATHLGH). Residues 187–192 (ERGGDP) carry the 'ERGGDP' region motif. Trp227 is an L-cysteinyl-5'-AMP binding site. Zn(2+) is bound at residue Cys231. L-cysteinyl-5'-AMP is bound at residue 249–251 (GSD). His256 contributes to the Zn(2+) binding site. An L-cysteinyl-5'-AMP-binding site is contributed by Ile283. The short motif at 289 to 293 (KMSKS) is the 'KMSKS' region element.

Belongs to the class-I aminoacyl-tRNA synthetase family. MshC subfamily. In terms of assembly, monomer. Zn(2+) is required as a cofactor.

The enzyme catalyses 1D-myo-inositol 2-amino-2-deoxy-alpha-D-glucopyranoside + L-cysteine + ATP = 1D-myo-inositol 2-(L-cysteinylamino)-2-deoxy-alpha-D-glucopyranoside + AMP + diphosphate + H(+). Catalyzes the ATP-dependent condensation of GlcN-Ins and L-cysteine to form L-Cys-GlcN-Ins. In Rhodococcus erythropolis (strain PR4 / NBRC 100887), this protein is L-cysteine:1D-myo-inositol 2-amino-2-deoxy-alpha-D-glucopyranoside ligase.